The sequence spans 1236 residues: Chitinase-like protein PB1E7.04c (1236 aa).

An N-terminal signal peptide occupies residues 1 to 19 (MRLISSLLLLVYSARLALS). Residues Asn21, Asn24, Asn54, Asn123, Asn225, Asn237, Asn255, Asn267, Asn277, Asn288, and Asn309 are each glycosylated (N-linked (GlcNAc...) asparagine). The GH18 domain maps to 26 to 325 (TAVLGYWGSN…EAIHKILDTK (300 aa)). Disordered stretches follow at residues 326 to 367 (SKHS…TSSA), 449 to 497 (VSSI…QSTL), and 584 to 625 (TSSP…STIL). Polar residues predominate over residues 339–351 (QGLESTSSIALNP). The segment covering 352 to 367 (TSSISSTSSSSSTSSA) has biased composition (low complexity). N-linked (GlcNAc...) asparagine glycans are attached at residues Asn715, Asn737, Asn768, Asn786, and Asn813. Disordered regions lie at residues 804–836 (ISTS…LAAN), 868–927 (TTAL…TSSS), 946–979 (TPTS…SSIA), and 1125–1159 (AASG…TPSN). Residues 810–821 (NEYNTSFHAPTV) show a composition bias toward polar residues. Over residues 822–832 (SSTTSSSSTTS) the composition is skewed to low complexity. The span at 1125 to 1156 (AASGSSTVTSSATASSSSSAATTADSSVTTDT) shows a compositional bias: low complexity.

It belongs to the glycosyl hydrolase 18 family. Chitinase class III subfamily.

The protein localises to the secreted. The protein is Chitinase-like protein PB1E7.04c of Schizosaccharomyces pombe (strain 972 / ATCC 24843) (Fission yeast).